The following is a 637-amino-acid chain: Threonine--tRNA ligase (637 aa).

One can recognise a TGS domain in the interval 1–61 (MPNVKLPDGN…KEDCSLIIVT (61 aa)). A catalytic region spans residues 242 to 533 (DHRKLGKALD…LIEHYAGKLP (292 aa)). Zn(2+) is bound by residues Cys333, His384, and His510.

Belongs to the class-II aminoacyl-tRNA synthetase family. In terms of assembly, homodimer. Zn(2+) serves as cofactor.

The protein localises to the cytoplasm. The catalysed reaction is tRNA(Thr) + L-threonine + ATP = L-threonyl-tRNA(Thr) + AMP + diphosphate + H(+). In terms of biological role, catalyzes the attachment of threonine to tRNA(Thr) in a two-step reaction: L-threonine is first activated by ATP to form Thr-AMP and then transferred to the acceptor end of tRNA(Thr). Also edits incorrectly charged L-seryl-tRNA(Thr). This is Threonine--tRNA ligase from Legionella pneumophila (strain Paris).